Reading from the N-terminus, the 448-residue chain is Histidine--tRNA ligase (448 aa).

The protein belongs to the class-II aminoacyl-tRNA synthetase family. As to quaternary structure, homodimer.

Its subcellular location is the cytoplasm. The catalysed reaction is tRNA(His) + L-histidine + ATP = L-histidyl-tRNA(His) + AMP + diphosphate + H(+). The polypeptide is Histidine--tRNA ligase (Treponema denticola (strain ATCC 35405 / DSM 14222 / CIP 103919 / JCM 8153 / KCTC 15104)).